The chain runs to 108 residues: MDQFECINVADAHQKLQEKEAVLVDIRDPQSFAMGHAVQTFHLTNDTLGAFMRDNDFDTPVMVMCYHGNSSKGAAQYLLQQGYDVVYSIDGGFEAWQRQFPAEVAYGA.

Residues 17–105 enclose the Rhodanese domain; that stretch reads QEKEAVLVDI…WQRQFPAEVA (89 aa). Catalysis depends on C65, which acts as the Cysteine persulfide intermediate.

The protein belongs to the GlpE family.

Its subcellular location is the cytoplasm. The catalysed reaction is thiosulfate + hydrogen cyanide = thiocyanate + sulfite + 2 H(+). It carries out the reaction thiosulfate + [thioredoxin]-dithiol = [thioredoxin]-disulfide + hydrogen sulfide + sulfite + 2 H(+). Its function is as follows. Transferase that catalyzes the transfer of sulfur from thiosulfate to thiophilic acceptors such as cyanide or dithiols. May function in a CysM-independent thiosulfate assimilation pathway by catalyzing the conversion of thiosulfate to sulfite, which can then be used for L-cysteine biosynthesis. The polypeptide is Thiosulfate sulfurtransferase GlpE (Shigella dysenteriae serotype 1 (strain Sd197)).